The sequence spans 394 residues: S-adenosylmethionine synthase 2 (394 aa).

A Mg(2+)-binding site is contributed by E11. Position 17 (H17) interacts with ATP. A K(+)-binding site is contributed by E45. Residues E58 and Q101 each coordinate L-methionine. ATP is bound by residues 169–171 (DGK), 237–240 (SGRF), D248, 254–255 (RK), A271, K275, and K279. Residue D248 participates in L-methionine binding. K279 provides a ligand contact to L-methionine.

Belongs to the AdoMet synthase family. Homotetramer. It depends on Mn(2+) as a cofactor. Mg(2+) serves as cofactor. The cofactor is Co(2+). K(+) is required as a cofactor.

It localises to the cytoplasm. It catalyses the reaction L-methionine + ATP + H2O = S-adenosyl-L-methionine + phosphate + diphosphate. It functions in the pathway amino-acid biosynthesis; S-adenosyl-L-methionine biosynthesis; S-adenosyl-L-methionine from L-methionine: step 1/1. Catalyzes the formation of S-adenosylmethionine from methionine and ATP. The reaction comprises two steps that are both catalyzed by the same enzyme: formation of S-adenosylmethionine (AdoMet) and triphosphate, and subsequent hydrolysis of the triphosphate. The polypeptide is S-adenosylmethionine synthase 2 (SAM2) (Oryza sativa subsp. japonica (Rice)).